A 179-amino-acid chain; its full sequence is Coiled-coil domain-containing protein 32 (179 aa).

The interval 36–65 (DNAFSDSFMDSHPAGESHTAAADSAVQPAG) is disordered. Positions 75–98 (EVYLASLEKKLRRIKGLNEEVTSK) form a coiled coil. The disordered stretch occupies residues 158–179 (LIPPESQAEKPEAGDKPAAAEQ).

In terms of assembly, interacts with AP2S1; the interaction is direct and mediates association with adaptor protein complex 2 (AP-2).

It localises to the membrane. The protein resides in the coated pit. In terms of biological role, regulates clathrin-mediated endocytsois of cargos such as transferrin probably through the association and modulation of adaptor protein complex 2 (AP-2). Has a role in ciliogenesis. Required for proper cephalic and left/right axis development. The polypeptide is Coiled-coil domain-containing protein 32 (Ccdc32) (Mus musculus (Mouse)).